A 137-amino-acid polypeptide reads, in one-letter code: Acetyltransferase Atu2258 (137 aa).

Residues 1-137 (MNFVLSDVAD…QSITWLEKRF (137 aa)) enclose the N-acetyltransferase domain. CoA contacts are provided by residues 66-68 (LFV), glycine 74, and 108-110 (RTY).

Its function is as follows. Catalyzes the transfer of an acetyl group from acetyl coenzyme A (AcCoA) to an acceptor substrate and releases both CoA and the acetylated product. It prefers glucosamine 6-phosphate or dopamine. It can also use the thialysine, N(8)-acetylspermidine, chloramphenicol, puromycin, polymyxin B, and 4-aminobutyrate ethyl ester. This is Acetyltransferase Atu2258 from Agrobacterium fabrum (strain C58 / ATCC 33970) (Agrobacterium tumefaciens (strain C58)).